A 420-amino-acid polypeptide reads, in one-letter code: Signal recognition particle receptor FtsY (420 aa).

Residues 28–62 (DLDRAMGKVAPDNKKTRDAKAAADARLAAEAEEAK) are compositionally biased toward basic and acidic residues. The interval 28–118 (DLDRAMGKVA…PETPESVGSR (91 aa)) is disordered. Over residues 63-104 (AATAAEPAKSAESAKAEPAPAAQAEPEPAAAPKPESQPASKP) the composition is skewed to low complexity. Residues 227-234 (GVNGTGKT), 310-314 (DTAGR), and 372-375 (SKLD) contribute to the GTP site.

It belongs to the GTP-binding SRP family. FtsY subfamily. Part of the signal recognition particle protein translocation system, which is composed of SRP and FtsY.

The protein localises to the cell membrane. The protein resides in the cytoplasm. The enzyme catalyses GTP + H2O = GDP + phosphate + H(+). Functionally, involved in targeting and insertion of nascent membrane proteins into the cytoplasmic membrane. Acts as a receptor for the complex formed by the signal recognition particle (SRP) and the ribosome-nascent chain (RNC). The sequence is that of Signal recognition particle receptor FtsY from Bifidobacterium longum (strain NCC 2705).